Here is a 344-residue protein sequence, read N- to C-terminus: Trace amine-associated receptor 8c (344 aa).

Residues 1–36 lie on the Extracellular side of the membrane; that stretch reads MTSNFSQATLQLCYENVNASCIKTPYSPGLRVLLYM. Residues asparagine 4 and asparagine 18 are each glycosylated (N-linked (GlcNAc...) asparagine). Cystine bridges form between cysteine 21–cysteine 185 and cysteine 96–cysteine 189. Residues 37 to 57 traverse the membrane as a helical segment; it reads VFGFGAVLAVCGNLLVVISVL. The Cytoplasmic portion of the chain corresponds to 58–67; the sequence is HFKQLHSPAN. A helical membrane pass occupies residues 68–88; it reads FLIASLASADFLVGISVMPFS. Over 89 to 102 the chain is Extracellular; it reads MVRSIESCWYFGDT. The helical transmembrane segment at 103 to 127 threads the bilayer; that stretch reads FCSLHSCCDVAFCYSSALHLCFISV. Topologically, residues 128–146 are cytoplasmic; it reads DRYIAVTDPLVYPTKFTVS. A helical membrane pass occupies residues 147 to 167; that stretch reads VSGICISISWILPLVYSSAVF. The Extracellular segment spans residues 168 to 196; the sequence is YTGISAMGIENLVSALNCVGGCQVVVNQD. Residues 197-217 traverse the membrane as a helical segment; the sequence is WVLISFLLFFIPTLVMIILYS. At 218–260 the chain is on the cytoplasmic side; sequence KIFLVAKQQAVKIETSVSGSKGESSLESHKARVAKRERKAAKT. A helical transmembrane segment spans residues 261 to 281; it reads LGVTVLAFIVSWLPYTIDTLI. The Extracellular segment spans residues 282 to 295; sequence DAFMGFITPAYVYE. The chain crosses the membrane as a helical span at residues 296–319; it reads FCCWSAYYNSAMNPLIYAFFYPWF. The Cytoplasmic portion of the chain corresponds to 320 to 344; the sequence is RKAMKLILSGKILKGHSSTTSLFSE.

This sequence belongs to the G-protein coupled receptor 1 family.

It is found in the cell membrane. In terms of biological role, olfactory receptor activated by trace amines, such as N-methylpiperidine and N,N-dimethylcyclohexylamine. Trace amine compounds are enriched in animal body fluids and act on trace amine-associated receptors (TAARs) to elicit both intraspecific and interspecific innate behaviors. Ligand-binding causes a conformation change that triggers signaling via G(s)-class of G alpha proteins (GNAL or GNAS). The polypeptide is Trace amine-associated receptor 8c (Rattus norvegicus (Rat)).